Consider the following 390-residue polypeptide: MFMFEKPHGMRDTLPGLYEAKKKVRSTLTDLIDKWGYQFMETPTLEFYETVGVQSAIEEQQLFKLLDQDGKTLVLRPDMTGPIARVAASKLHKHNHPLRAGYAASVYRAQEREGGRPAEFEQVGAELIGDGSTSADAEVIALAAGALKNAGLHRFKIAIGHAGLADELFVEVLGNAERADVLRRFLFEKNYVGYREHVKSLPLSSIDKSRLLALLELRGGKEICAKAEEIIGISGQSLIQELEDLWDILEDYGCAEHIRLDLNMVSHMSYYTGILFEVYAANVGFVIGSGGRYNNLLGHFGSPAPATGFGLRIDRLIEALGIQEETSEADAVIFSKEQRAQAILFAEEERARGRKVVLQDLAGIENIDHMTKSFANVTYFIGARKEEQNG.

It belongs to the class-II aminoacyl-tRNA synthetase family. HisZ subfamily. In terms of assembly, heteromultimer composed of HisG and HisZ subunits.

Its subcellular location is the cytoplasm. It functions in the pathway amino-acid biosynthesis; L-histidine biosynthesis; L-histidine from 5-phospho-alpha-D-ribose 1-diphosphate: step 1/9. Required for the first step of histidine biosynthesis. May allow the feedback regulation of ATP phosphoribosyltransferase activity by histidine. This chain is ATP phosphoribosyltransferase regulatory subunit, found in Bacillus velezensis (strain DSM 23117 / BGSC 10A6 / LMG 26770 / FZB42) (Bacillus amyloliquefaciens subsp. plantarum).